Reading from the N-terminus, the 394-residue chain is Phosphoglycerate kinase (394 aa).

Substrate-binding positions include 21 to 23, R36, 59 to 62, R118, and R151; these read DFN and HLGR. ATP-binding positions include K202, G293, E324, and 350 to 353; that span reads GGDS.

It belongs to the phosphoglycerate kinase family. In terms of assembly, monomer.

Its subcellular location is the cytoplasm. It catalyses the reaction (2R)-3-phosphoglycerate + ATP = (2R)-3-phospho-glyceroyl phosphate + ADP. It functions in the pathway carbohydrate degradation; glycolysis; pyruvate from D-glyceraldehyde 3-phosphate: step 2/5. The sequence is that of Phosphoglycerate kinase from Exiguobacterium sp. (strain ATCC BAA-1283 / AT1b).